The following is a 414-amino-acid chain: DNA primase small subunit PriS (414 aa).

Catalysis depends on residues aspartate 98, aspartate 100, and aspartate 312.

It belongs to the eukaryotic-type primase small subunit family. As to quaternary structure, heterodimer of a small subunit (PriS) and a large subunit (PriL). Requires Mg(2+) as cofactor. It depends on Mn(2+) as a cofactor.

Functionally, catalytic subunit of DNA primase, an RNA polymerase that catalyzes the synthesis of short RNA molecules used as primers for DNA polymerase during DNA replication. The small subunit contains the primase catalytic core and has DNA synthesis activity on its own. Binding to the large subunit stabilizes and modulates the activity, increasing the rate of DNA synthesis while decreasing the length of the DNA fragments, and conferring RNA synthesis capability. The DNA polymerase activity may enable DNA primase to also catalyze primer extension after primer synthesis. May also play a role in DNA repair. The protein is DNA primase small subunit PriS of Methanosarcina mazei (strain ATCC BAA-159 / DSM 3647 / Goe1 / Go1 / JCM 11833 / OCM 88) (Methanosarcina frisia).